We begin with the raw amino-acid sequence, 665 residues long: Soluble lamin-associated protein of 75 kDa (665 aa).

A disordered region spans residues 309 to 665; sequence AFASTSEGPE…GPGKKKAKLT (357 aa). Positions 311–326 are enriched in polar residues; sequence ASTSEGPEKTPVSTRT. Positions 327–338 are enriched in basic residues; the sequence is RSSHLKRPKIGK. 2 positions are modified to phosphoserine: Ser-348 and Ser-377. Over residues 376 to 397 the composition is skewed to acidic residues; that stretch reads SSEEFLEEEPEQGVIDFEDESG. The segment covering 412–421 has biased composition (basic and acidic residues); that stretch reads QKQDGDKDSA. The segment covering 440–451 has biased composition (acidic residues); that stretch reads TEDEDSTSEGLE. Residues Ser-447 and Ser-512 each carry the phosphoserine modification. Composition is skewed to polar residues over residues 521 to 533 and 553 to 566; these read LGSS…VSNI and VSQN…SSVE. Residues Ser-610, Ser-613, and Ser-630 each carry the phosphoserine modification. Over residues 646–665 the composition is skewed to basic residues; sequence NLRRKAKGHKGPGKKKAKLT.

Belongs to the FAM169 family.

The protein resides in the nucleus envelope. It is found in the nucleus inner membrane. In Mus musculus (Mouse), this protein is Soluble lamin-associated protein of 75 kDa (Fam169a).